Consider the following 1215-residue polypeptide: DNA-directed RNA polymerase subunit beta' (1215 aa).

Positions 60, 62, 75, and 78 each coordinate Zn(2+). Residues D450, D452, and D454 each contribute to the Mg(2+) site. The Zn(2+) site is built by C818, C892, C899, and C902.

The protein belongs to the RNA polymerase beta' chain family. As to quaternary structure, the RNAP catalytic core consists of 2 alpha, 1 beta, 1 beta' and 1 omega subunit. When a sigma factor is associated with the core the holoenzyme is formed, which can initiate transcription. Mg(2+) is required as a cofactor. The cofactor is Zn(2+).

The enzyme catalyses RNA(n) + a ribonucleoside 5'-triphosphate = RNA(n+1) + diphosphate. DNA-dependent RNA polymerase catalyzes the transcription of DNA into RNA using the four ribonucleoside triphosphates as substrates. The chain is DNA-directed RNA polymerase subunit beta' from Streptococcus suis (strain 98HAH33).